A 491-amino-acid polypeptide reads, in one-letter code: Glutamine synthetase (491 aa).

The GS beta-grasp domain maps to 23 to 111 (NNVRQVLCAF…MFGNVYEAWG (89 aa)). A GS catalytic domain is found at 119-491 (PRGYVAKRYE…PWEFMKYFDI (373 aa)). Mg(2+)-binding residues include Glu-143 and Glu-145. Glu-225 contacts ATP. Glu-230 and Glu-238 together coordinate Mg(2+). L-glutamate-binding positions include 282–283 (NA) and Ala-283. Mg(2+) is bound at residue His-287. ATP contacts are provided by residues 289 to 291 (HQS) and Ser-291. The L-glutamate site is built by Arg-344, Glu-350, and Arg-362. ATP-binding residues include Arg-362 and Arg-367. Glu-381 serves as a coordination point for Mg(2+). Arg-383 lines the L-glutamate pocket.

The protein belongs to the glutamine synthetase family. As to quaternary structure, oligomer of 12 subunits arranged in the form of two hexagons. The cofactor is Mg(2+).

It is found in the cytoplasm. It catalyses the reaction L-glutamate + NH4(+) + ATP = L-glutamine + ADP + phosphate + H(+). In terms of biological role, probably involved in nitrogen metabolism via ammonium assimilation. Catalyzes the ATP-dependent biosynthesis of glutamine from glutamate and ammonia. Beta-glutamate is a much poorer substrate than alpha-glutamate. In Archaeoglobus fulgidus (strain ATCC 49558 / DSM 4304 / JCM 9628 / NBRC 100126 / VC-16), this protein is Glutamine synthetase.